The primary structure comprises 121 residues: Protein MGF 110-5L (121 aa).

Positions 1–20 are cleaved as a signal peptide; it reads MLVIFLGILGLLANQVSSQL. N-linked (GlcNAc...) asparagine; by host glycans are attached at residues Asn-62 and Asn-116.

The protein belongs to the asfivirus MGF 110 family.

The sequence is that of Protein MGF 110-5L from African swine fever virus (isolate Portugal/Lis 57/1957) (ASFV).